We begin with the raw amino-acid sequence, 51 residues long: Large ribosomal subunit protein eL39 (51 aa).

It belongs to the eukaryotic ribosomal protein eL39 family.

The sequence is that of Large ribosomal subunit protein eL39 from Methanosarcina barkeri (strain Fusaro / DSM 804).